A 149-amino-acid chain; its full sequence is MSTQSRILILNGPNLNLLGLREPAHYGSQNLEQIVNALTIQATALNVELEHLQSNREYELIEAIHNAYQRIDFIIINPAAFTHTSVALRDALLGVDIPFIEVHLSNVHAREPFRHHSYLSDKAVGVICGLGADGYEFALKAAVKRLRSN.

The active-site Proton acceptor is Tyr-26. Residues Asn-77, His-83, and Asp-90 each coordinate substrate. His-103 acts as the Proton donor in catalysis. Residues 104–105 (LS) and Arg-114 each bind substrate.

Belongs to the type-II 3-dehydroquinase family. As to quaternary structure, homododecamer.

The catalysed reaction is 3-dehydroquinate = 3-dehydroshikimate + H2O. It functions in the pathway metabolic intermediate biosynthesis; chorismate biosynthesis; chorismate from D-erythrose 4-phosphate and phosphoenolpyruvate: step 3/7. Catalyzes a trans-dehydration via an enolate intermediate. This is 3-dehydroquinate dehydratase from Aliivibrio salmonicida (strain LFI1238) (Vibrio salmonicida (strain LFI1238)).